The primary structure comprises 354 residues: UDP-N-acetylglucosamine--N-acetylmuramyl-(pentapeptide) pyrophosphoryl-undecaprenol N-acetylglucosamine transferase (354 aa).

UDP-N-acetyl-alpha-D-glucosamine is bound by residues 11-13, Arg164, Ser194, and Gln289; that span reads SAG.

Belongs to the glycosyltransferase 28 family. MurG subfamily.

The protein localises to the cell membrane. It carries out the reaction di-trans,octa-cis-undecaprenyl diphospho-N-acetyl-alpha-D-muramoyl-L-alanyl-D-glutamyl-meso-2,6-diaminopimeloyl-D-alanyl-D-alanine + UDP-N-acetyl-alpha-D-glucosamine = di-trans,octa-cis-undecaprenyl diphospho-[N-acetyl-alpha-D-glucosaminyl-(1-&gt;4)]-N-acetyl-alpha-D-muramoyl-L-alanyl-D-glutamyl-meso-2,6-diaminopimeloyl-D-alanyl-D-alanine + UDP + H(+). It participates in cell wall biogenesis; peptidoglycan biosynthesis. Cell wall formation. Catalyzes the transfer of a GlcNAc subunit on undecaprenyl-pyrophosphoryl-MurNAc-pentapeptide (lipid intermediate I) to form undecaprenyl-pyrophosphoryl-MurNAc-(pentapeptide)GlcNAc (lipid intermediate II). This is UDP-N-acetylglucosamine--N-acetylmuramyl-(pentapeptide) pyrophosphoryl-undecaprenol N-acetylglucosamine transferase from Shouchella clausii (strain KSM-K16) (Alkalihalobacillus clausii).